The primary structure comprises 299 residues: tRNA dimethylallyltransferase (299 aa).

13–20 (GPTASGKT) lines the ATP pocket. 15 to 20 (TASGKT) serves as a coordination point for substrate. Positions 38–41 (DSRQ) are interaction with substrate tRNA.

The protein belongs to the IPP transferase family. Monomer. It depends on Mg(2+) as a cofactor.

The catalysed reaction is adenosine(37) in tRNA + dimethylallyl diphosphate = N(6)-dimethylallyladenosine(37) in tRNA + diphosphate. Its function is as follows. Catalyzes the transfer of a dimethylallyl group onto the adenine at position 37 in tRNAs that read codons beginning with uridine, leading to the formation of N6-(dimethylallyl)adenosine (i(6)A). The chain is tRNA dimethylallyltransferase from Prochlorococcus marinus (strain MIT 9515).